Here is a 248-residue protein sequence, read N- to C-terminus: GTP cyclohydrolase 1 type 2 homolog (248 aa).

A divalent metal cation-binding residues include His-64, His-65, Asp-101, His-216, and Glu-220.

Belongs to the GTP cyclohydrolase I type 2/NIF3 family. As to quaternary structure, homohexamer.

In Borreliella burgdorferi (strain ATCC 35210 / DSM 4680 / CIP 102532 / B31) (Borrelia burgdorferi), this protein is GTP cyclohydrolase 1 type 2 homolog.